The following is a 726-amino-acid chain: Dipeptidyl-peptidase 5 (726 aa).

The first 19 residues, 1-19 (MAPAKWLIASLAFASTGLA), serve as a signal peptide directing secretion. 2 N-linked (GlcNAc...) asparagine glycosylation sites follow: Asn-96 and Asn-252. The disordered stretch occupies residues 268 to 292 (VAEPINKRNGPRTPHGIEGASSSPV). Asn-485 carries N-linked (GlcNAc...) asparagine glycosylation. The Charge relay system role is filled by Ser-558. An N-linked (GlcNAc...) asparagine glycan is attached at Asn-605. Active-site charge relay system residues include Asp-641 and His-673. Asn-699 carries N-linked (GlcNAc...) asparagine glycosylation.

The protein belongs to the peptidase S9C family.

Its subcellular location is the secreted. Functionally, extracellular dipeptidyl-peptidase which removes N-terminal dipeptides sequentially from polypeptides having unsubstituted N-termini. Contributes to pathogenicity. In Arthroderma otae (Microsporum canis), this protein is Dipeptidyl-peptidase 5 (DPP5).